The chain runs to 187 residues: Tetratricopeptide repeat protein 36 (187 aa).

TPR repeat units lie at residues 47 to 80 (VKDL…LPQR), 82 to 114 (SAYN…SNGK), and 119 to 152 (CQAL…GSEF).

The protein belongs to the TTC36 family.

This is Tetratricopeptide repeat protein 36 (ttc36) from Danio rerio (Zebrafish).